The chain runs to 1483 residues: Chromosome partition protein MukB (1483 aa).

An ATP-binding site is contributed by 34–41; that stretch reads GGNGAGKS. 2 coiled-coil regions span residues 311-426 and 547-607; these read EMAR…LQRA and GQQV…WLAA. The tract at residues 666–783 is flexible hinge; it reads PGGSEDARLN…KVPLFGRAAR (118 aa). 2 coiled-coil regions span residues 835–1115 and 1206–1266; these read EAAL…SAKA and DDPV…QAVS. Residues 850-870 form a disordered region; it reads RELNNHESENQQQRQQYEQAK.

This sequence belongs to the SMC family. MukB subfamily. In terms of assembly, homodimerization via its hinge domain. Binds to DNA via its C-terminal region. Interacts, and probably forms a ternary complex, with MukE and MukF via its C-terminal region. The complex formation is stimulated by calcium or magnesium. Interacts with tubulin-related protein FtsZ.

It localises to the cytoplasm. It is found in the nucleoid. Plays a central role in chromosome condensation, segregation and cell cycle progression. Functions as a homodimer, which is essential for chromosome partition. Involved in negative DNA supercoiling in vivo, and by this means organize and compact chromosomes. May achieve or facilitate chromosome segregation by condensation DNA from both sides of a centrally located replisome during cell division. The protein is Chromosome partition protein MukB of Erwinia tasmaniensis (strain DSM 17950 / CFBP 7177 / CIP 109463 / NCPPB 4357 / Et1/99).